The chain runs to 214 residues: Octanoyltransferase (214 aa).

The region spanning 32–207 is the BPL/LPL catalytic domain; it reads EDTLDEIWLV…NLLALLNHPP (176 aa). Substrate-binding positions include 71-78, 138-140, and 151-153; these read RGGQVTYH, SLG, and GLA. Cys169 (acyl-thioester intermediate) is an active-site residue.

The protein belongs to the LipB family.

It localises to the cytoplasm. The catalysed reaction is octanoyl-[ACP] + L-lysyl-[protein] = N(6)-octanoyl-L-lysyl-[protein] + holo-[ACP] + H(+). The protein operates within protein modification; protein lipoylation via endogenous pathway; protein N(6)-(lipoyl)lysine from octanoyl-[acyl-carrier-protein]: step 1/2. Catalyzes the transfer of endogenously produced octanoic acid from octanoyl-acyl-carrier-protein onto the lipoyl domains of lipoate-dependent enzymes. Lipoyl-ACP can also act as a substrate although octanoyl-ACP is likely to be the physiological substrate. This chain is Octanoyltransferase, found in Klebsiella pneumoniae subsp. pneumoniae (strain ATCC 700721 / MGH 78578).